Reading from the N-terminus, the 28-residue chain is U15-ctenitoxin-Co1a (28 aa).

Intrachain disulfides connect Cys3/Cys17 and Cys10/Cys22.

As to expression, expressed by the venom gland.

The protein resides in the secreted. Functionally, insecticidal neurotoxin that reversibly inhibits the N-methyl-D-aspartate (NMDA)-subtype of ionotropic glutamate receptor (GRIN) and inhibits inactivation of insect sodium channels (Nav). In vivo, is highly toxic to insects. The polypeptide is U15-ctenitoxin-Co1a (Ctenus ornatus (Brazilian spider)).